A 431-amino-acid polypeptide reads, in one-letter code: Na(+)-translocating NADH-quinone reductase subunit F (431 aa).

Residues 10–30 (IFIASTAFCALGLLLVAIILL) traverse the membrane as a helical segment. The 2Fe-2S ferredoxin-type domain occupies 41-133 (CKLRINNDDS…DMNLEIEERY (93 aa)). Residues cysteine 76, cysteine 82, cysteine 85, and cysteine 117 each contribute to the [2Fe-2S] cluster site. In terms of domain architecture, FAD-binding FR-type spans 136 to 286 (ASSWEGTVVS…SGPYGESFMK (151 aa)). Residues 289-413 (NRPVIFLIGG…ALHNSSILTL (125 aa)) form a catalytic region.

It belongs to the NqrF family. In terms of assembly, composed of six subunits; NqrA, NqrB, NqrC, NqrD, NqrE and NqrF. The cofactor is [2Fe-2S] cluster. FAD serves as cofactor.

It is found in the cell inner membrane. The catalysed reaction is a ubiquinone + n Na(+)(in) + NADH + H(+) = a ubiquinol + n Na(+)(out) + NAD(+). Functionally, NQR complex catalyzes the reduction of ubiquinone-1 to ubiquinol by two successive reactions, coupled with the transport of Na(+) ions from the cytoplasm to the periplasm. The first step is catalyzed by NqrF, which accepts electrons from NADH and reduces ubiquinone-1 to ubisemiquinone by a one-electron transfer pathway. The chain is Na(+)-translocating NADH-quinone reductase subunit F from Chlamydia muridarum (strain MoPn / Nigg).